A 125-amino-acid polypeptide reads, in one-letter code: Large ribosomal subunit protein bL12 (125 aa).

In terms of assembly, homodimer. Part of the ribosomal stalk of the 50S ribosomal subunit. Forms a multimeric L10(L12)X complex, where L10 forms an elongated spine to which 2 to 4 L12 dimers bind in a sequential fashion. Binds GTP-bound translation factors. Two isoforms seem to exist. One is probably dimethylated on Lys-69 and monomethylated on Lys-86 while the other is probably acetylated or trimethylated on both Lys-86 and Lys-89.

Forms part of the ribosomal stalk which helps the ribosome interact with GTP-bound translation factors. Is thus essential for accurate translation. This is Large ribosomal subunit protein bL12 from Rhodopseudomonas palustris (strain ATCC BAA-98 / CGA009).